We begin with the raw amino-acid sequence, 92 residues long: Small ribosomal subunit protein uS19 (92 aa).

Belongs to the universal ribosomal protein uS19 family.

Protein S19 forms a complex with S13 that binds strongly to the 16S ribosomal RNA. The sequence is that of Small ribosomal subunit protein uS19 from Bifidobacterium animalis subsp. lactis (strain AD011).